We begin with the raw amino-acid sequence, 446 residues long: Tryptophan synthase beta chain 2 (446 aa).

At Lys110 the chain carries N6-(pyridoxal phosphate)lysine.

This sequence belongs to the TrpB family. In terms of assembly, tetramer of two alpha and two beta chains. It depends on pyridoxal 5'-phosphate as a cofactor.

It carries out the reaction (1S,2R)-1-C-(indol-3-yl)glycerol 3-phosphate + L-serine = D-glyceraldehyde 3-phosphate + L-tryptophan + H2O. Its pathway is amino-acid biosynthesis; L-tryptophan biosynthesis; L-tryptophan from chorismate: step 5/5. In terms of biological role, the beta subunit is responsible for the synthesis of L-tryptophan from indole and L-serine. The protein is Tryptophan synthase beta chain 2 (trpB2) of Pyrococcus furiosus (strain ATCC 43587 / DSM 3638 / JCM 8422 / Vc1).